We begin with the raw amino-acid sequence, 335 residues long: Leukocyte immunoglobulin-like receptor subfamily B member 4A (335 aa).

The N-terminal stretch at 1 to 23 (MIAMLTVLLYLGLILEPRTAVQA) is a signal peptide. At 24–238 (GHLPKPIIWA…TEDGLETYQK (215 aa)) the chain is on the extracellular side. 2 consecutive Ig-like C2-type domains span residues 42–125 (YTSV…ENPS) and 124–212 (PSLS…KPSN). An intrachain disulfide couples cysteine 49 to cysteine 98. Residues asparagine 133 and asparagine 191 are each glycosylated (N-linked (GlcNAc...) asparagine). A disulfide bond links cysteine 144 and cysteine 196. A helical transmembrane segment spans residues 239 to 260 (ILIGVLVSFLLLFFLLLFLILI). Residues 261–335 (GYQYGHKKKA…CIRTQEQNNS (75 aa)) lie on the Cytoplasmic side of the membrane. 2 short sequence motifs (ITIM motif) span residues 298-303 (IVYAQV) and 320-325 (VTYAQL).

In terms of assembly, interacts (when tyrosine phosphorylated) with SH2 domain-containing phosphatases PTPN6/SHP-1 and PTPN11/SHP-2; interaction with PTPN6 enhances inhibition of mast cell activation. In terms of processing, tyrosine phosphorylated. As to expression, expressed on mast cells and natural killer cells (at protein level). Expressed on neutrophils (at protein level). Expressed on eosinophils (at protein level). Expressed on dendritic cells (at protein level). Expressed on memory and marginal zone B cells (at protein level). Expressed on CD8 T cells (at protein level). Expressed in the uterus of pregnant mice where it is detected at day 4.0 of pregnancy with levels dropping at day 4.5. Highly expressed in the luminal epithelium of uterine endometrium with lower levels in the glandular epithelium.

The protein resides in the cell membrane. Inhibitory receptor involved in the down-regulation of the immune response. Receptor for FN1. Receptor for integrin ITGAV/ITGB3. Inhibits IgE-mediated mast cell activation, at least in part through interaction with ITGAV/ITGB3. Also inhibits KITLG/SCF-mediated mast cell activation. Through interaction with ITGAV/ITGB3, inhibits antibody production by memory and marginal zone B cells, probably by suppressing their differentiation into plasma cells. Inhibits IFNG production by CD8 T cells, CD4 T cells and natural killer cells. Inhibits antigen presentation by dendritic cells to T cells, preventing T cell activation. Inhibits lipopolysaccharide-mediated neutrophil-dependent vascular injury. Suppresses the allergic inflammatory response by inhibiting infiltration of neutrophils and eosinophils and preventing mast cell degranulation. Inhibits lysis by natural killer cells. The polypeptide is Leukocyte immunoglobulin-like receptor subfamily B member 4A (Mus musculus (Mouse)).